Reading from the N-terminus, the 320-residue chain is Chitinase 3 (320 aa).

A signal peptide spans 1–18; that stretch reads MRALALAVVAMAVVAVRG. In terms of domain architecture, Chitin-binding type-1 spans 19–59; the sequence is EQCGSQAGGALCPNCLCCSQYGWCGSTSDYCGAGCQSQCSG. Disulfide bonds link Cys-21–Cys-36, Cys-30–Cys-42, Cys-33–Cys-61, Cys-35–Cys-49, Cys-53–Cys-57, Cys-97–Cys-159, Cys-172–Cys-180, and Cys-279–Cys-311. Glu-141 serves as the catalytic Proton donor.

Belongs to the glycosyl hydrolase 19 family. Chitinase class I subfamily. Expressed at low levels in roots, leaves, sheaths and meristems.

The catalysed reaction is Random endo-hydrolysis of N-acetyl-beta-D-glucosaminide (1-&gt;4)-beta-linkages in chitin and chitodextrins.. Hydrolyzes chitin and plays a role in defense against fungal pathogens containing chitin. Inhibits the growth of T.reesei fungus on plate assay. In Oryza sativa subsp. japonica (Rice), this protein is Chitinase 3 (Cht3).